The primary structure comprises 212 residues: Pyridoxine/pyridoxamine 5'-phosphate oxidase (212 aa).

Residues 8 to 11 (RRSY) and K66 contribute to the substrate site. FMN-binding positions include 61-66 (RIVLLK), 76-77 (FT), R82, K83, and Q105. The substrate site is built by Y123, R127, and S131. Residues 140 to 141 (QS) and W184 each bind FMN. 190–192 (RLH) is a binding site for substrate. FMN is bound at residue R194.

Belongs to the pyridoxamine 5'-phosphate oxidase family. As to quaternary structure, homodimer. FMN is required as a cofactor.

It carries out the reaction pyridoxamine 5'-phosphate + O2 + H2O = pyridoxal 5'-phosphate + H2O2 + NH4(+). The catalysed reaction is pyridoxine 5'-phosphate + O2 = pyridoxal 5'-phosphate + H2O2. Its pathway is cofactor metabolism; pyridoxal 5'-phosphate salvage; pyridoxal 5'-phosphate from pyridoxamine 5'-phosphate: step 1/1. The protein operates within cofactor metabolism; pyridoxal 5'-phosphate salvage; pyridoxal 5'-phosphate from pyridoxine 5'-phosphate: step 1/1. Functionally, catalyzes the oxidation of either pyridoxine 5'-phosphate (PNP) or pyridoxamine 5'-phosphate (PMP) into pyridoxal 5'-phosphate (PLP). This Cupriavidus necator (strain ATCC 17699 / DSM 428 / KCTC 22496 / NCIMB 10442 / H16 / Stanier 337) (Ralstonia eutropha) protein is Pyridoxine/pyridoxamine 5'-phosphate oxidase.